Reading from the N-terminus, the 183-residue chain is Protein US32 (183 aa).

Belongs to the herpesviridae US1 family.

The protein is Protein US32 (US32) of Homo sapiens (Human).